Reading from the N-terminus, the 98-residue chain is Co-chaperonin GroES 3 (98 aa).

The protein belongs to the GroES chaperonin family. In terms of assembly, heptamer of 7 subunits arranged in a ring. Interacts with the chaperonin GroEL.

The protein localises to the cytoplasm. In terms of biological role, together with the chaperonin GroEL, plays an essential role in assisting protein folding. The GroEL-GroES system forms a nano-cage that allows encapsulation of the non-native substrate proteins and provides a physical environment optimized to promote and accelerate protein folding. GroES binds to the apical surface of the GroEL ring, thereby capping the opening of the GroEL channel. The protein is Co-chaperonin GroES 3 of Mesorhizobium japonicum (strain LMG 29417 / CECT 9101 / MAFF 303099) (Mesorhizobium loti (strain MAFF 303099)).